The primary structure comprises 397 residues: Acetate kinase (397 aa).

Residue asparagine 8 coordinates Mg(2+). An ATP-binding site is contributed by lysine 15. A substrate-binding site is contributed by arginine 90. Aspartate 147 serves as the catalytic Proton donor/acceptor. Position 207–211 (207–211 (HLGAG)) interacts with ATP. Glutamate 382 lines the Mg(2+) pocket.

This sequence belongs to the acetokinase family. In terms of assembly, homodimer. Mg(2+) serves as cofactor. It depends on Mn(2+) as a cofactor.

It localises to the cytoplasm. It catalyses the reaction acetate + ATP = acetyl phosphate + ADP. It functions in the pathway metabolic intermediate biosynthesis; acetyl-CoA biosynthesis; acetyl-CoA from acetate: step 1/2. Functionally, catalyzes the formation of acetyl phosphate from acetate and ATP. Can also catalyze the reverse reaction. This Lactiplantibacillus plantarum (strain ATCC BAA-793 / NCIMB 8826 / WCFS1) (Lactobacillus plantarum) protein is Acetate kinase.